A 748-amino-acid chain; its full sequence is Phosphoenolpyruvate-dependent phosphotransferase system (748 aa).

One can recognise a GAF domain in the interval 1–127 (MLTRLREIVE…RRQLLGVLVV (127 aa)). Residues 128 to 170 (QQRELRQYDESEESFLVTLATQMAAILSQSQVTALFGQYRQTR) are linker. Positions 171–748 (IRALPAAPGV…GMGGLIRGGL (578 aa)) are PTS EI. His356 functions as the Tele-phosphohistidine intermediate in the catalytic mechanism. Arg462 and Arg498 together coordinate phosphoenolpyruvate. Mg(2+) contacts are provided by Glu597 and Asp621. Phosphoenolpyruvate is bound by residues 620–621 (ND) and Arg631. The active-site Proton donor is Cys668.

Belongs to the PEP-utilizing enzyme family. It depends on Mg(2+) as a cofactor.

It localises to the cytoplasm. It catalyses the reaction L-histidyl-[protein] + phosphoenolpyruvate = N(pros)-phospho-L-histidyl-[protein] + pyruvate. Its function is as follows. Component of the phosphoenolpyruvate-dependent nitrogen-metabolic phosphotransferase system (nitrogen-metabolic PTS), that seems to be involved in regulating nitrogen metabolism. Enzyme I-Ntr transfers the phosphoryl group from phosphoenolpyruvate (PEP) to the phosphoryl carrier protein (NPr). Could function in the transcriptional regulation of sigma-54 dependent operons in conjunction with the NPr (PtsO) and EIIA-Ntr (PtsN) proteins. Enzyme I-Ntr is specific for NPr. This is Phosphoenolpyruvate-dependent phosphotransferase system (ptsP) from Salmonella typhimurium (strain LT2 / SGSC1412 / ATCC 700720).